Here is a 317-residue protein sequence, read N- to C-terminus: Apolipoprotein E (317 aa).

A signal peptide spans 1-18 (MKVLWAALLVTFLAGCQA). Repeat copies occupy residues 80-101 (ALMDETMKELKAYKSELEEQLT), 102-123 (PVAEETRARLSKELQAAQARLG), 124-145 (ADMEDVRGRLVQYRGEVQAMLG), 146-167 (QSTEELRARLASHLRKLRKRLL), 168-189 (RDADDLQKRLAVYQAGAREGAE), 190-211 (RGVSAIRERLGPLVEQGRVRAA), 212-233 (TVGSVAGKPLQERAQAWGERLR), and 234-255 (ARMEEMGSRTRDRLDEVKEQVA). Residues 80-255 (ALMDETMKEL…RLDEVKEQVA (176 aa)) are 8 X 22 AA approximate tandem repeats. The residue at position 143 (M143) is a Methionine sulfoxide. At S147 the chain carries Phosphoserine. The tract at residues 158 to 168 (HLRKLRKRLLR) is LDL and other lipoprotein receptors binding. 162-165 (LRKR) contacts heparin. Positions 210-290 (AATVGSVAGK…SWFEPLVEDM (81 aa)) are lipid-binding and lipoprotein association. 229–236 (GERLRARM) provides a ligand contact to heparin. A homooligomerization region spans residues 266-317 (QQIRLQAEAFQARLKSWFEPLVEDMQRQWAGLVEKVQAAVGTSAAPVPSDNH). Residues 278–290 (RLKSWFEPLVEDM) are specificity for association with VLDL.

The protein belongs to the apolipoprotein A1/A4/E family. Homotetramer. May interact with ABCA1; functionally associated with ABCA1 in the biogenesis of HDLs. May interact with APP/A4 amyloid-beta peptide; the interaction is extremely stable in vitro but its physiological significance is unclear. May interact with MAPT. May interact with MAP2. In the cerebrospinal fluid, interacts with secreted SORL1. Interacts with PMEL; this allows the loading of PMEL luminal fragment on ILVs to induce fibril nucleation. In terms of processing, APOE exists as multiple glycosylated and sialylated glycoforms within cells and in plasma. The extent of glycosylation and sialylation are tissue and context specific. Glycated in plasma VLDL. Post-translationally, phosphorylated by FAM20C in the extracellular medium.

Its subcellular location is the secreted. It is found in the extracellular space. It localises to the extracellular matrix. The protein resides in the extracellular vesicle. The protein localises to the endosome. Its subcellular location is the multivesicular body. APOE is an apolipoprotein, a protein associating with lipid particles, that mainly functions in lipoprotein-mediated lipid transport between organs via the plasma and interstitial fluids. APOE is a core component of plasma lipoproteins and is involved in their production, conversion and clearance. Apolipoproteins are amphipathic molecules that interact both with lipids of the lipoprotein particle core and the aqueous environment of the plasma. As such, APOE associates with chylomicrons, chylomicron remnants, very low density lipoproteins (VLDL) and intermediate density lipoproteins (IDL) but shows a preferential binding to high-density lipoproteins (HDL). It also binds a wide range of cellular receptors including the LDL receptor/LDLR, the LDL receptor-related proteins LRP1, LRP2 and LRP8 and the very low-density lipoprotein receptor/VLDLR that mediate the cellular uptake of the APOE-containing lipoprotein particles. Finally, APOE also has a heparin-binding activity and binds heparan-sulfate proteoglycans on the surface of cells, a property that supports the capture and the receptor-mediated uptake of APOE-containing lipoproteins by cells. A main function of APOE is to mediate lipoprotein clearance through the uptake of chylomicrons, VLDLs, and HDLs by hepatocytes. APOE is also involved in the biosynthesis by the liver of VLDLs as well as their uptake by peripheral tissues ensuring the delivery of triglycerides and energy storage in muscle, heart and adipose tissues. By participating in the lipoprotein-mediated distribution of lipids among tissues, APOE plays a critical role in plasma and tissues lipid homeostasis. APOE is also involved in two steps of reverse cholesterol transport, the HDLs-mediated transport of cholesterol from peripheral tissues to the liver, and thereby plays an important role in cholesterol homeostasis. First, it is functionally associated with ABCA1 in the biogenesis of HDLs in tissues. Second, it is enriched in circulating HDLs and mediates their uptake by hepatocytes. APOE also plays an important role in lipid transport in the central nervous system, regulating neuron survival and sprouting. In Pongo pygmaeus (Bornean orangutan), this protein is Apolipoprotein E (APOE).